Here is a 433-residue protein sequence, read N- to C-terminus: 3-phosphoshikimate 1-carboxyvinyltransferase (433 aa).

Lysine 22, serine 23, and arginine 27 together coordinate 3-phosphoshikimate. Lysine 22 serves as a coordination point for phosphoenolpyruvate. Residues glycine 95 and arginine 123 each coordinate phosphoenolpyruvate. Serine 166, glutamine 168, aspartate 314, and lysine 341 together coordinate 3-phosphoshikimate. Position 168 (glutamine 168) interacts with phosphoenolpyruvate. Residue aspartate 314 is the Proton acceptor of the active site. Residues arginine 345 and arginine 386 each contribute to the phosphoenolpyruvate site.

This sequence belongs to the EPSP synthase family. As to quaternary structure, monomer.

The protein resides in the cytoplasm. It catalyses the reaction 3-phosphoshikimate + phosphoenolpyruvate = 5-O-(1-carboxyvinyl)-3-phosphoshikimate + phosphate. Its pathway is metabolic intermediate biosynthesis; chorismate biosynthesis; chorismate from D-erythrose 4-phosphate and phosphoenolpyruvate: step 6/7. Its function is as follows. Catalyzes the transfer of the enolpyruvyl moiety of phosphoenolpyruvate (PEP) to the 5-hydroxyl of shikimate-3-phosphate (S3P) to produce enolpyruvyl shikimate-3-phosphate and inorganic phosphate. The polypeptide is 3-phosphoshikimate 1-carboxyvinyltransferase (Acidithiobacillus ferrooxidans (strain ATCC 23270 / DSM 14882 / CIP 104768 / NCIMB 8455) (Ferrobacillus ferrooxidans (strain ATCC 23270))).